The chain runs to 415 residues: Casein kinase 1-like protein 3 (415 aa).

One can recognise a Protein kinase domain in the interval 9–277 (YKLGRKIGGG…FLKRLFRDLF (269 aa)). ATP-binding positions include 15–23 (IGGGSFGEI) and K38. D128 acts as the Proton acceptor in catalysis. Composition is skewed to polar residues over residues 303 to 314 (NQSQAVPGSSNP) and 373 to 415 (NMPS…SPEK). 2 disordered regions span residues 303-330 (NQSQAVPGSSNPRAMPVDTSNHRGGPNI) and 344-415 (NAIG…SPEK).

It belongs to the protein kinase superfamily. CK1 Ser/Thr protein kinase family. Casein kinase I subfamily. In terms of processing, slightly autophosphorylated. Expressed in seedlings, stems, leaves and flowers.

The protein localises to the cytoplasm. The protein resides in the nucleus. It catalyses the reaction L-seryl-[protein] + ATP = O-phospho-L-seryl-[protein] + ADP + H(+). The catalysed reaction is L-threonyl-[protein] + ATP = O-phospho-L-threonyl-[protein] + ADP + H(+). Protein kinase involved in blue light responses (e.g. hypocotyl elongation and flowering) by phosphorylating CRY2 to reduce its stability. This is Casein kinase 1-like protein 3 from Arabidopsis thaliana (Mouse-ear cress).